Here is a 965-residue protein sequence, read N- to C-terminus: Receptor-like protein 15 (965 aa).

The signal sequence occupies residues 1–23; sequence MEGKVFLGHNLIWVMLLMGQLHG. Topologically, residues 24–916 are extracellular; it reads YKSCIDEEKI…GVEADESIID (893 aa). N-linked (GlcNAc...) asparagine glycans are attached at residues Asn57, Asn95, Asn109, and Asn145. 17 LRR repeats span residues 80-102, 103-127, 131-154, 156-179, 180-204, 206-230, 243-267, 268-290, 292-315, 316-341, 342-365, 366-389, 391-415, 417-435, 437-461, 462-485, and 487-512; these read EISFGGLSLKDNSLLNLSLLHPF, EDVRSLNLSSSRCSGLFDDVEGYKS, LRKLEILDLASNKFNNSIFHFLSA, TSLTTLFLRSNNMDGSFPAKELRD, LTNLELLDLSRNRFNGSIPIQELSS, RKLKALDLSGNEFSGSMELQGKFCT, LNNMQELDLSQNKLVGHLPSCLTSL, TGLRVLDLSSNKLTGTVPSSLGS, QSLEYLSLFDNDFEGSFSFGSLAN, LSNLMVLKLCSKSSSLQVLSESSWKP, KFQLSVIALRSCNMEKVPHFLLHQ, KDLRHVDLSDNNISGKLPSWLLAN, TKLKVLLLQNNLFTSFQIPKSAHNL, FLDVSANDFNHLFPENIGW, FPHLRYLNTSKNNFQENLPSSLGNM, NGIQYMDLSRNSFHGNLPRSFVNG, and YSMAILKLSHNKLSGEIFPESTNFTN. N-linked (GlcNAc...) asparagine glycosylation occurs at Asn194. Asn315 is a glycosylation site (N-linked (GlcNAc...) asparagine). N-linked (GlcNAc...) asparagine glycosylation is found at Asn377 and Asn389. N-linked (GlcNAc...) asparagine glycosylation occurs at Asn444. A glycan (N-linked (GlcNAc...) asparagine) is linked at Asn509. One copy of the LRR 18; degenerate repeat lies at 514–533; sequence LGLFMDNNLFTGKIGQGLRS. LRR repeat units follow at residues 534–557, 558–582, 584–606, 608–627, 628–652, 654–674, 675–698, 778–801, 802–825, 827–850, and 851–875; these read LINLELLDMSNNNLTGVIPSWIGE, LPSLTALLISDNFLKGDIPMSLFNK, SLQLLDLSANSLSGVIPPQHDSR, GVVLLLQDNKLSGTIPDTLL, ANVEILDLRNNRFSGKIPEFINIQN, SILLLRGNNFTGQIPHQLCGL, SNIQLLDLSNNRLNGTIPSCLSNT, LKLLFGMDLSENELSGEIPVEFGG, LLELRALNLSHNNLSGVIPKSISS, EKMESFDLSFNRLQGRIPSQLTEL, and TSLSVFKVSHNNLSGVIPQGRQFNT. N-linked (GlcNAc...) asparagine glycans are attached at residues Asn546 and Asn581. N-linked (GlcNAc...) asparagine glycosylation is found at Asn652, Asn662, Asn688, and Asn697. N-linked (GlcNAc...) asparagine glycosylation is found at Asn809 and Asn814. N-linked (GlcNAc...) asparagine glycosylation is found at Asn862, Asn893, and Asn898. Residues 917–937 traverse the membrane as a helical segment; it reads MVSFYLSFAAAYVTILIGILA. At 938-965 the chain is on the cytoplasmic side; sequence SLSFDSPWSRFWFYKVDAFIKKVRNLLL.

This sequence belongs to the RLP family.

It is found in the cell membrane. This Arabidopsis thaliana (Mouse-ear cress) protein is Receptor-like protein 15.